Here is a 151-residue protein sequence, read N- to C-terminus: Ribonuclease H (151 aa).

The RNase H type-1 domain maps to 1 to 146 (MSDLFAYTDG…ADELARAGMA (146 aa)). Mg(2+) contacts are provided by Asp-9, Glu-52, Asp-74, and Asp-138.

It belongs to the RNase H family. In terms of assembly, monomer. Mg(2+) is required as a cofactor.

The protein localises to the cytoplasm. The enzyme catalyses Endonucleolytic cleavage to 5'-phosphomonoester.. Functionally, endonuclease that specifically degrades the RNA of RNA-DNA hybrids. The sequence is that of Ribonuclease H from Cereibacter sphaeroides (strain ATCC 17025 / ATH 2.4.3) (Rhodobacter sphaeroides).